The sequence spans 295 residues: UDP-N-acetylenolpyruvoylglucosamine reductase (295 aa).

One can recognise an FAD-binding PCMH-type domain in the interval 23–188 (KVGGPADFLA…ISAKFALKPG (166 aa)). Arg-167 is an active-site residue. Catalysis depends on Ser-217, which acts as the Proton donor. Residue Glu-287 is part of the active site.

It belongs to the MurB family. FAD serves as cofactor.

The protein localises to the cytoplasm. It catalyses the reaction UDP-N-acetyl-alpha-D-muramate + NADP(+) = UDP-N-acetyl-3-O-(1-carboxyvinyl)-alpha-D-glucosamine + NADPH + H(+). It participates in cell wall biogenesis; peptidoglycan biosynthesis. Its function is as follows. Cell wall formation. The polypeptide is UDP-N-acetylenolpyruvoylglucosamine reductase (Streptococcus pyogenes serotype M1).